The primary structure comprises 1158 residues: MAAVRGAPLLSCLLALLALCPGGRPQTVLTDDEIEEFLEGFLSELEPEPREDDVEAPPPPEPTPRVRKAQAGGKPGKRPGTAAEVPPEKTKDKGKKGKKDKGPKVPKESLEGSPRPPKKGKEKPPKATKKPKEKPPKATKKPKEKPPKATKKPKEKPPKATKKPPSGKRPPILAPSETLEWPLPPPPSPGPEELPQEGGAPLSNNWQNPGEETHVEAREHQPEPEEETEQPTLDYNDQIEREDYEDFEYIRRQKQPRPPPSRRRRPERVWPEPPEEKAPAPAPEERIEPPVKPLLPPLPPDYGDGYVIPNYDDMDYYFGPPPPQKPDAERQTDEEKEELKKPKKEDSSPKEETDKWAVEKGKDHKEPRKGEELEEEWTPTEKVKCPPIGMESHRIEDNQIRASSMLRHGLGAQRGRLNMQTGATEDDYYDGAWCAEDDARTQWIEVDTRRTTRFTGVITQGRDSSIHDDFVTTFFVGFSNDSQTWVMYTNGYEEMTFHGNVDKDTPVLSELPEPVVARFIRIYPLTWNGSLCMRLEVLGCSVAPVYSYYAQNEVVATDDLDFRHHSYKDMRQLMKVVNEECPTITRTYSLGKSSRGLKIYAMEISDNPGEHELGEPEFRYTAGIHGNEVLGRELLLLLMQYLCREYRDGNPRVRSLVQDTRIHLVPSLNPDGYEVAAQMGSEFGNWALGLWTEEGFDIFEDFPDLNSVLWGAEERKWVPYRVPNNNLPIPERYLSPDATVSTEVRAIIAWMEKNPFVLGANLNGGERLVSYPYDMARTPTQEQLLAAAMAAARGEDEDEVSEAQETPDHAIFRWLAISFASAHLTLTEPYRGGCQAQDYTGGMGIVNGAKWNPRTGTINDFSYLHTNCLELSFYLGCDKFPHESELPREWENNKEALLTFMEQVHRGIKGVVTDEQGIPIANATISVSGINHGVKTASGGDYWRILNPGEYRVTAHAEGYTPSAKTCNVDYDIGATQCNFILARSNWKRIREIMAMNGNRPIPHIDPSRPMTPQQRRLQQRRLQHRLRLRAQMRLRRLNATTTLGPHTVPPTLPPAPATTLSTTIEPWGLIPPTTAGWEESETETYTEVVTEFGTEVEPEFGTKVEPEFETQLEPEFETQLEPEFEEEEEEEKEEEIATGQAFPFTTVETYTVNFGDF.

The N-terminal stretch at 1 to 25 is a signal peptide; that stretch reads MAAVRGAPLLSCLLALLALCPGGRP. The interval 41–387 is disordered; it reads FLSELEPEPR…TPTEKVKCPP (347 aa). Positions 45–55 are enriched in acidic residues; it reads LEPEPREDDVE. The span at 100 to 110 shows a compositional bias: basic and acidic residues; it reads DKGPKVPKESL. Basic residues predominate over residues 116–166; sequence PPKKGKEKPPKATKKPKEKPPKATKKPKEKPPKATKKPKEKPPKATKKPPS. A compositionally biased stretch (pro residues) spans 182–192; the sequence is PLPPPPSPGPE. The segment covering 193 to 202 has biased composition (low complexity); sequence ELPQEGGAPL. Residues 211-223 show a composition bias toward basic and acidic residues; it reads EETHVEAREHQPE. Over residues 252-266 the composition is skewed to basic residues; it reads RQKQPRPPPSRRRRP. Over residues 267 to 289 the composition is skewed to basic and acidic residues; the sequence is ERVWPEPPEEKAPAPAPEERIEP. Residues 290–300 are compositionally biased toward pro residues; sequence PVKPLLPPLPP. Residues 326 to 371 show a composition bias toward basic and acidic residues; the sequence is PDAERQTDEEKEELKKPKKEDSSPKEETDKWAVEKGKDHKEPRKGE. The F5/8 type C domain maps to 383–540; the sequence is VKCPPIGMES…LCMRLEVLGC (158 aa). Residues 390-555 are required for DNA-binding and interaction with NFKBIA; that stretch reads MESHRIEDNQ…YSYYAQNEVV (166 aa). Residues 421 to 624 form an interaction with MAPK1 and MAPK3 region; the sequence is TGATEDDYYD…EPEFRYTAGI (204 aa). Asn528 is a glycosylation site (N-linked (GlcNAc...) asparagine). The segment at 555-985 is interaction with PTEN; the sequence is VATDDLDFRH…TQCNFILARS (431 aa). Residues 563–904 form the Peptidase M14 domain; the sequence is RHHSYKDMRQ…EALLTFMEQV (342 aa). Asn922 is a glycosylation site (N-linked (GlcNAc...) asparagine). A required for transcriptional repression region spans residues 941–1158; sequence DYWRILNPGE…ETYTVNFGDF (218 aa). An interaction with MAPK1 and MAPK3 region spans residues 1006–1158; that stretch reads DPSRPMTPQQ…ETYTVNFGDF (153 aa). A compositionally biased stretch (acidic residues) spans 1108-1137; it reads EFETQLEPEFETQLEPEFEEEEEEEKEEEI. Residues 1108–1141 form a disordered region; the sequence is EFETQLEPEFETQLEPEFEEEEEEEKEEEIATGQ.

It belongs to the peptidase M14 family. In terms of assembly, isoform 1: Interacts with different types of collagen, including collagens I, III, and V. Isoform 2: Interacts with GNG5, NFKBIA, MAPK1, MAPK3 and PTEN. Interaction with MAPK1 may stimulate DNA-binding. May interact with calmodulin. Binds to DNA in vitro. Post-translationally, phosphorylated by MAPK1 in vitro. In terms of tissue distribution, expressed in osteoblast and visceral fat.

The protein resides in the secreted. It localises to the cytoplasm. It is found in the nucleus. Its function is as follows. As a positive regulator of collagen fibrillogenesis, it is probably involved in the organization and remodeling of the extracellular matrix. May positively regulate MAP-kinase activity in adipocytes, leading to enhanced adipocyte proliferation and reduced adipocyte differentiation. May also positively regulate NF-kappa-B activity in macrophages by promoting the phosphorylation and subsequent degradation of I-kappa-B-alpha (NFKBIA), leading to enhanced macrophage inflammatory responsiveness. Can act as a transcriptional repressor. The protein is Adipocyte enhancer-binding protein 1 (AEBP1) of Homo sapiens (Human).